Reading from the N-terminus, the 213-residue chain is FMN-dependent NADH:quinone oxidoreductase (213 aa).

This sequence belongs to the azoreductase type 1 family. In terms of assembly, homodimer. The cofactor is FMN.

The catalysed reaction is 2 a quinone + NADH + H(+) = 2 a 1,4-benzosemiquinone + NAD(+). It catalyses the reaction N,N-dimethyl-1,4-phenylenediamine + anthranilate + 2 NAD(+) = 2-(4-dimethylaminophenyl)diazenylbenzoate + 2 NADH + 2 H(+). Its function is as follows. Quinone reductase that provides resistance to thiol-specific stress caused by electrophilic quinones. In terms of biological role, also exhibits azoreductase activity. Catalyzes the reductive cleavage of the azo bond in aromatic azo compounds to the corresponding amines. This chain is FMN-dependent NADH:quinone oxidoreductase, found in Streptococcus agalactiae serotype III (strain NEM316).